Here is an 80-residue protein sequence, read N- to C-terminus: DNA-binding protein HU-like (80 aa).

This sequence belongs to the bacterial histone-like protein family.

Functionally, histone-like DNA-binding protein which is capable of wrapping DNA to stabilize it, and thus to prevent its denaturation under extreme environmental conditions. The chain is DNA-binding protein HU-like from Rickettsia prowazekii (strain Madrid E).